The following is a 644-amino-acid chain: Beta-mannosyltransferase 2 (644 aa).

Residues 1 to 6 (MRTRLN) are Cytoplasmic-facing. Residues 7 to 27 (FLLLCIASVLSVIWIGVLLTW) form a helical membrane-spanning segment. At 28 to 644 (NDNNLGGISL…NDKKDLKIRQ (617 aa)) the chain is on the extracellular side. The N-linked (GlcNAc...) asparagine glycan is linked to Asn-484. A coiled-coil region spans residues 512–644 (TRGEAERRRR…NDKKDLKIRQ (133 aa)). The tract at residues 517 to 644 (ERRRRVAEER…NDKKDLKIRQ (128 aa)) is disordered.

The protein belongs to the BMT family.

It localises to the membrane. Its function is as follows. Beta-mannosyltransferase involved in cell wall biosynthesis. Initiates the beta-mannosylation of core N-linked glycans. The sequence is that of Beta-mannosyltransferase 2 (BMT2) from Komagataella phaffii (strain GS115 / ATCC 20864) (Yeast).